Reading from the N-terminus, the 957-residue chain is Retinoblastoma-related protein 1 (957 aa).

The interval 369–569 (TPVSTAMTTA…EKGSSMYNSL (201 aa)) is domain A. Residues 369–808 (TPVSTAMTTA…NEVFIPTVKP (440 aa)) form a pocket region. Residues 570–677 (IVARPTLSAE…PAAGGETCAE (108 aa)) are spacer. The interval 678 to 808 (TGIGVFLSKI…NEVFIPTVKP (131 aa)) is domain B. The interval 814–854 (GPGTSPNRNNEPKSGGDAASFPESPRLSRFPNLPDMSPKKV) is disordered.

It belongs to the retinoblastoma protein (RB) family.

Its subcellular location is the nucleus. Regulator of biological processes that recruits a histone deacetylase to control gene transcription. May play a role in the entry into mitosis, negatively regulating the cell proliferation. Formation of stable complexes with geminiviridae replication-associated proteins may create a cellular environment which favors viral DNA replication. This chain is Retinoblastoma-related protein 1 (RBR1), found in Triticum aestivum (Wheat).